The primary structure comprises 362 residues: DNA replication and repair protein RecF (362 aa).

Gly-30–Thr-37 is an ATP binding site.

Belongs to the RecF family.

Its subcellular location is the cytoplasm. Functionally, the RecF protein is involved in DNA metabolism; it is required for DNA replication and normal SOS inducibility. RecF binds preferentially to single-stranded, linear DNA. It also seems to bind ATP. The polypeptide is DNA replication and repair protein RecF (Proteus mirabilis (strain HI4320)).